Here is a 140-residue protein sequence, read N- to C-terminus: Gonadotropin subunit beta-2 (140 aa).

Positions 1-23 (MGTPVKILVVLFSVIVLLAVAQS) are cleaved as a signal peptide. 6 disulfides stabilise this stretch: cysteine 29–cysteine 77, cysteine 43–cysteine 92, cysteine 46–cysteine 130, cysteine 54–cysteine 108, cysteine 58–cysteine 110, and cysteine 113–cysteine 120. A glycan (N-linked (GlcNAc...) asparagine) is linked at asparagine 33.

The protein belongs to the glycoprotein hormones subunit beta family. As to quaternary structure, heterodimer of an alpha and a beta chain.

The protein localises to the secreted. In terms of biological role, involved in gametogenesis and steroidogenesis. The protein is Gonadotropin subunit beta-2 (cgbb) of Carassius auratus (Goldfish).